The sequence spans 210 residues: Regulator of G-protein signaling 17 (210 aa).

The tract at residues 1-21 (MRKRQQSQNEGTPAVSQAPGN) is disordered. The region spanning 84-200 (NFDKMMKAPA…LNSQIYKSFV (117 aa)) is the RGS domain. At Y137 the chain carries Phosphotyrosine.

In terms of assembly, interacts with GNAI1 and GNAQ. Interacts with GNAZ and GNAI2. Interacts with OPRM1. Forms a complex with mu-opioid receptors and G(alpha)z/i2 subunits, including GNAZ and GNAI2; the formation of this complex results in mu-opioid receptor desensitization. Interacts with HINT1. In terms of processing, N- and O-glycosylated in synapsomal membranes. Post-translationally, serine phosphorylated in synapsomal membranes. Sumoylated with SUMO1 and SUM02 in synaptosomes. The sumoylated forms act as a scaffold for sequestering mu-opioid receptor-activated G(alpha) subunits. Desumoylated by HINT1. In terms of tissue distribution, predominantly expressed in the cerebellum. Also expressed in the cortex and medulla. Weakly expressed in a number of peripheral tissues notably spleen, lung and leukocytes.

The protein resides in the membrane. It is found in the synapse. The protein localises to the synaptosome. Its subcellular location is the nucleus. It localises to the cytoplasm. In terms of biological role, regulates G protein-coupled receptor signaling cascades, including signaling via muscarinic acetylcholine receptor CHRM2 and dopamine receptor DRD2. Inhibits signal transduction by increasing the GTPase activity of G protein alpha subunits, thereby driving them into their inactive GDP-bound form. Binds selectively to GNAZ and GNAI2 subunits, accelerates their GTPase activity and regulates their signaling activities. Negatively regulates mu-opioid receptor-mediated activation of the G-proteins. The polypeptide is Regulator of G-protein signaling 17 (RGS17) (Homo sapiens (Human)).